The sequence spans 525 residues: Retinoblastoma-binding-like protein E (525 aa).

5 WD repeats span residues 25-66, 69-108, 222-261, 267-312, and 313-352; these read PKNI…IVRT, HHTGCVNSISWSRNGKKLLTASNDGSLVLWDLATSKILYS, SSNTTVKQIEFSRNHRFMLVSSSDKVLRLISLESTNLYQQ, DSVN…KDLE, and GPKEGLVDVVWHPLRPIIVSISFTGVIYVWTAYFEENWSS. Disordered stretches follow at residues 371–398 and 462–525; these read DEFDAKDSDNENQEVNNNNNNNIGRNPY and EKYQ…KKRK. Over residues 383 to 392 the composition is skewed to low complexity; it reads QEVNNNNNNN. Over residues 462–471 the composition is skewed to basic and acidic residues; the sequence is EKYQKDKEDS. Positions 472-500 are enriched in low complexity; it reads SSTTSNSTISSSSSPSPSSSSTTTTTTTS. The segment covering 501-525 has biased composition (basic and acidic residues); sequence QKKDETQKKEKSTKKERNSDSKKRK.

The protein resides in the nucleus. Functionally, involved in mono-, di- and trimethylation at 'Lys-4' of histone H3. Histone H3 'Lys-4' methylation represents a specific tag for epigenetic transcriptional activation. The polypeptide is Retinoblastoma-binding-like protein E (Dictyostelium discoideum (Social amoeba)).